We begin with the raw amino-acid sequence, 529 residues long: CTP synthase (529 aa).

An amidoligase domain region spans residues 1-267; that stretch reads MKEAKFIFVT…DTQILEHFHL (267 aa). CTP is bound at residue S15. S15 contacts UTP. Residues 16-21 and D73 each bind ATP; that span reads SLGKGL. Mg(2+)-binding residues include D73 and E141. CTP contacts are provided by residues 148–150, 188–193, and K224; these read DIE and KTKPTQ. Residues 188–193 and K224 each bind UTP; that span reads KTKPTQ. The Glutamine amidotransferase type-1 domain occupies 292-529; the sequence is TVSIVGKYTE…SFVKAAIDKK (238 aa). Position 354 (G354) interacts with L-glutamine. C381 functions as the Nucleophile; for glutamine hydrolysis in the catalytic mechanism. Residues 382 to 385, E405, and R459 contribute to the L-glutamine site; that span reads LGMQ. Residues H504 and E506 contribute to the active site.

Belongs to the CTP synthase family. As to quaternary structure, homotetramer.

It catalyses the reaction UTP + L-glutamine + ATP + H2O = CTP + L-glutamate + ADP + phosphate + 2 H(+). The enzyme catalyses L-glutamine + H2O = L-glutamate + NH4(+). The catalysed reaction is UTP + NH4(+) + ATP = CTP + ADP + phosphate + 2 H(+). The protein operates within pyrimidine metabolism; CTP biosynthesis via de novo pathway; CTP from UDP: step 2/2. Its activity is regulated as follows. Allosterically activated by GTP, when glutamine is the substrate; GTP has no effect on the reaction when ammonia is the substrate. The allosteric effector GTP functions by stabilizing the protein conformation that binds the tetrahedral intermediate(s) formed during glutamine hydrolysis. Inhibited by the product CTP, via allosteric rather than competitive inhibition. Functionally, catalyzes the ATP-dependent amination of UTP to CTP with either L-glutamine or ammonia as the source of nitrogen. Regulates intracellular CTP levels through interactions with the four ribonucleotide triphosphates. The polypeptide is CTP synthase (Wolbachia pipientis wMel).